The primary structure comprises 265 residues: Energy-coupling factor transporter transmembrane protein EcfT (265 aa).

6 consecutive transmembrane segments (helical) span residues 26–46, 47–67, 72–92, 107–127, 152–172, and 243–263; these read MVFVFIMMILIFLMNNWQTYA, VGIILIFIILKASNLSFMFLF, PILFLLIFTLLMHIFLTKGGA, VIMGIMISLRFILIIFLTTIM, LPVHELALMMSIALRFIPTLM, and HTYDTLSLLTLIPITLLILYL.

It belongs to the energy-coupling factor EcfT family. As to quaternary structure, forms a stable energy-coupling factor (ECF) transporter complex composed of 2 membrane-embedded substrate-binding proteins (S component), 2 ATP-binding proteins (A component) and 2 transmembrane proteins (T component). May be able to interact with more than 1 S component at a time.

The protein resides in the cell membrane. Its function is as follows. Transmembrane (T) component of an energy-coupling factor (ECF) ABC-transporter complex. Unlike classic ABC transporters this ECF transporter provides the energy necessary to transport a number of different substrates. The chain is Energy-coupling factor transporter transmembrane protein EcfT from Macrococcus caseolyticus (strain JCSC5402) (Macrococcoides caseolyticum).